Reading from the N-terminus, the 106-residue chain is Urease subunit beta (106 aa).

The protein belongs to the urease beta subunit family. As to quaternary structure, heterotrimer of UreA (gamma), UreB (beta) and UreC (alpha) subunits. Three heterotrimers associate to form the active enzyme.

It is found in the cytoplasm. The enzyme catalyses urea + 2 H2O + H(+) = hydrogencarbonate + 2 NH4(+). It participates in nitrogen metabolism; urea degradation; CO(2) and NH(3) from urea (urease route): step 1/1. This is Urease subunit beta from Prochlorococcus marinus subsp. pastoris (strain CCMP1986 / NIES-2087 / MED4).